Here is an 804-residue protein sequence, read N- to C-terminus: ABC transporter aclQ (804 aa).

A run of 9 helical transmembrane segments spans residues 3–23 (LAVL…ISYL), 52–72 (FTAI…SITI), 97–117 (IAVF…PFSP), 119–139 (LSHS…LAMF), 155–175 (LQLG…ALYF), 206–226 (HGGW…LWPS), 239–259 (FVLL…LGIV), 349–369 (LVFQ…YFLI), and 373–393 (AFYS…TIYM). The ABC transmembrane type-1 domain occupies 236 to 518 (IFCFVLLVIQ…FGSFYTQVQN (283 aa)). N460 carries N-linked (GlcNAc...) asparagine glycosylation. 2 helical membrane passes run 464–484 (NLLF…QISA) and 489–509 (VAMF…LNFF). An ABC transporter domain is found at 552–786 (VEFTHVNFAY…NGMYSQMWAK (235 aa)). 585–592 (GESGSGKS) serves as a coordination point for ATP. N639 and N797 each carry an N-linked (GlcNAc...) asparagine glycan.

Belongs to the ABC transporter superfamily. ABCB family. Heavy Metal importer (TC 3.A.1.210) subfamily.

It localises to the membrane. Its function is as follows. ABC transporter; part of the gene cluster that mediates the biosynthesis of aspirochlorine (or antibiotic A30641), an unusual halogenated spiro compound with distinctive antifungal properties due to selective inhibition of protein biosynthesis, and which is also active against bacteria, viruses, and murine tumor cells. The protein is ABC transporter aclQ of Aspergillus oryzae (strain ATCC 42149 / RIB 40) (Yellow koji mold).